The following is a 217-amino-acid chain: Uracil phosphoribosyltransferase (217 aa).

5-phospho-alpha-D-ribose 1-diphosphate-binding positions include Arg-84, Arg-109, and 137 to 145 (DPMLATGGS). Uracil contacts are provided by residues Ile-202 and 207 to 209 (GDA). Asp-208 is a 5-phospho-alpha-D-ribose 1-diphosphate binding site.

It belongs to the UPRTase family. Requires Mg(2+) as cofactor.

The catalysed reaction is UMP + diphosphate = 5-phospho-alpha-D-ribose 1-diphosphate + uracil. It participates in pyrimidine metabolism; UMP biosynthesis via salvage pathway; UMP from uracil: step 1/1. Allosterically activated by GTP. Catalyzes the conversion of uracil and 5-phospho-alpha-D-ribose 1-diphosphate (PRPP) to UMP and diphosphate. The protein is Uracil phosphoribosyltransferase of Synechococcus elongatus (strain ATCC 33912 / PCC 7942 / FACHB-805) (Anacystis nidulans R2).